The sequence spans 210 residues: Phosphate propanoyltransferase (210 aa).

Residue valine 26–asparagine 28 participates in CoA binding. Positions 30 and 32 each coordinate Zn(2+). Residues lysine 71 and arginine 78 each contribute to the CoA site. Arginine 84 contributes to the phosphate binding site. 4 residues coordinate Zn(2+): glutamate 90, histidine 138, histidine 140, and histidine 186. Asparagine 193 provides a ligand contact to CoA.

Belongs to the PduL family. In terms of assembly, monomer, when purified in the absence of the encapsulation peptide (EP, residues 1-27). The EP may influence oligomerization. It depends on Zn(2+) as a cofactor.

The protein localises to the bacterial microcompartment. It carries out the reaction propanoyl-CoA + phosphate = propanoyl phosphate + CoA. Its pathway is polyol metabolism; 1,2-propanediol degradation. Functionally, involved in 1,2-propanediol (1,2-PD) utilization in the bacterial microcompartment (BMC) dedicated to 1,2-PD degradation by catalyzing the conversion of propanoyl-CoA to propanoyl-phosphate. Also able to catalyze the reverse reaction. Also has phosphate acetyltransferase activity to a lesser extent. Required for optimal growth on 1,2-PD when the BMC is intact. CoA is regenerated within the BMC (for use by PduP) via this enzyme, although there must also be cofactor transport across the BMC. Directly targeted to the BMC. In terms of biological role, the 1,2-PD-specific bacterial microcompartment (BMC) concentrates low levels of 1,2-PD catabolic enzymes, concentrates volatile reaction intermediates thus enhancing pathway flux and keeps the level of toxic, mutagenic propionaldehyde low. The chain is Phosphate propanoyltransferase from Salmonella typhimurium (strain LT2 / SGSC1412 / ATCC 700720).